Reading from the N-terminus, the 264-residue chain is 3-methyl-2-oxobutanoate hydroxymethyltransferase (264 aa).

2 residues coordinate Mg(2+): Asp45 and Asp84. 3-methyl-2-oxobutanoate-binding positions include 45-46 (DS), Asp84, and Lys112. Position 114 (Glu114) interacts with Mg(2+). Residue Glu181 is the Proton acceptor of the active site.

It belongs to the PanB family. As to quaternary structure, homodecamer; pentamer of dimers. It depends on Mg(2+) as a cofactor.

It localises to the cytoplasm. The enzyme catalyses 3-methyl-2-oxobutanoate + (6R)-5,10-methylene-5,6,7,8-tetrahydrofolate + H2O = 2-dehydropantoate + (6S)-5,6,7,8-tetrahydrofolate. Its pathway is cofactor biosynthesis; (R)-pantothenate biosynthesis; (R)-pantoate from 3-methyl-2-oxobutanoate: step 1/2. In terms of biological role, catalyzes the reversible reaction in which hydroxymethyl group from 5,10-methylenetetrahydrofolate is transferred onto alpha-ketoisovalerate to form ketopantoate. This chain is 3-methyl-2-oxobutanoate hydroxymethyltransferase, found in Shewanella oneidensis (strain ATCC 700550 / JCM 31522 / CIP 106686 / LMG 19005 / NCIMB 14063 / MR-1).